The primary structure comprises 401 residues: Tryptophan synthase beta chain (401 aa).

An N6-(pyridoxal phosphate)lysine modification is found at Lys-91.

It belongs to the TrpB family. In terms of assembly, tetramer of two alpha and two beta chains. Pyridoxal 5'-phosphate serves as cofactor.

It carries out the reaction (1S,2R)-1-C-(indol-3-yl)glycerol 3-phosphate + L-serine = D-glyceraldehyde 3-phosphate + L-tryptophan + H2O. It participates in amino-acid biosynthesis; L-tryptophan biosynthesis; L-tryptophan from chorismate: step 5/5. Its function is as follows. The beta subunit is responsible for the synthesis of L-tryptophan from indole and L-serine. This is Tryptophan synthase beta chain from Lactococcus lactis subsp. cremoris (strain SK11).